A 194-amino-acid chain; its full sequence is Potassium-transporting ATPase KdpC subunit (194 aa).

The chain crosses the membrane as a helical span at residues 12 to 34 (LFLLLLTGGVYPLLTTALGQWWF).

The protein belongs to the KdpC family. In terms of assembly, the system is composed of three essential subunits: KdpA, KdpB and KdpC.

The protein localises to the cell inner membrane. Functionally, part of the high-affinity ATP-driven potassium transport (or Kdp) system, which catalyzes the hydrolysis of ATP coupled with the electrogenic transport of potassium into the cytoplasm. This subunit acts as a catalytic chaperone that increases the ATP-binding affinity of the ATP-hydrolyzing subunit KdpB by the formation of a transient KdpB/KdpC/ATP ternary complex. This Salmonella heidelberg (strain SL476) protein is Potassium-transporting ATPase KdpC subunit.